We begin with the raw amino-acid sequence, 403 residues long: Putative F-box/LRR-repeat protein At5g38386 (403 aa).

An F-box domain is found at 1 to 47 (MDHLSNLPDELLCHIMSFLTTKEAALISVLSKRWRNLIAFVPNLDIF). LRR repeat units follow at residues 64 to 91 (IRQL…SLCC), 93 to 119 (GGSY…DLSM), 131 to 156 (VFEN…VMNH), 175 to 203 (LKTL…SYSD), 243 to 274 (YLYF…SIKS), and 275 to 300 (VESR…VLEA).

In Arabidopsis thaliana (Mouse-ear cress), this protein is Putative F-box/LRR-repeat protein At5g38386.